An 89-amino-acid polypeptide reads, in one-letter code: Cell division topological specificity factor (89 aa).

The protein belongs to the MinE family.

Functionally, prevents the cell division inhibition by proteins MinC and MinD at internal division sites while permitting inhibition at polar sites. This ensures cell division at the proper site by restricting the formation of a division septum at the midpoint of the long axis of the cell. The protein is Cell division topological specificity factor of Pectobacterium atrosepticum (strain SCRI 1043 / ATCC BAA-672) (Erwinia carotovora subsp. atroseptica).